The following is an 80-amino-acid chain: Nuclear protein 1 (80 aa).

Disordered stretches follow at residues 1–21 and 38–80; these read MATLPPTANPSQQPLNLEDED and VGGG…KAWR. The segment covering 61–80 has biased composition (basic and acidic residues); sequence GHERKLLTKFQNSERKKAWR. The short motif at 64–80 is the Nuclear localization signal element; that stretch reads RKLLTKFQNSERKKAWR.

Belongs to the NUPR family. As to quaternary structure, monomer. Directly interacts with MSL1 and binds MORF4L1, two components of histone acetyltransferase complex; the interaction with MORF4L1 may be mediated by MSL1. Interacts with EP300; this interaction enhances the effect of EP300 on PAX2 transcription factor activity. Interacts with PAXIP1; this interaction prevents PAXIP1 inhibition of PAX2 transcription factor activity. Interacts with COPS5; this interaction allows COPS5-dependent CDKN1B nuclear to cytoplasm translocation. Interacts with RNF2. Interacts with FOXO3; this interaction represses FOXO3 transactivation. Interacts with PTMA; regulates apoptotic process. Interacts with MYOD1, EP300 and DDX5; this interaction coordinates the association of anti-proliferative and pro-myogenic proteins at the myogenin promoter. Interacts with TP53; interaction is stress-dependent. Forms a complex with EP300 and TP53; this complex binds CDKN1A promoter leading to transcriptional induction of CDKN1A. In terms of processing, phosphorylated. Phosphorylation promotes DNA-binding activity. Post-translationally, acetylated. Highly expressed in pancreas and both ovaries and testes.

It localises to the nucleus. The protein localises to the cytoplasm. It is found in the perinuclear region. In terms of biological role, transcription regulator that converts stress signals into a program of gene expression that empowers cells with resistance to the stress induced by a change in their microenvironment. Thereby participates in the regulation of many processes namely cell-cycle, apoptosis, autophagy and DNA repair responses. Controls cell cycle progression and protects cells from genotoxic stress induced by doxorubicin through the complex formation with TP53 and EP300 that binds CDKN1A promoter leading to transcriptional induction of CDKN1A. Protects pancreatic cancer cells from stress-induced cell death by binding the RELB promoter and activating its transcription, leading to IER3 transactivation. Negatively regulates apoptosis through interaction with PTMA. Inhibits autophagy-induced apoptosis in cardiac cells through FOXO3 interaction, inducing cytoplasmic translocation of FOXO3 thereby preventing the FOXO3 association with the pro-autophagic BNIP3 promoter. Inhibits cell growth and facilitates programmed cell death by apoptosis after adriamycin-induced DNA damage through transactivation of TP53. Regulates methamphetamine-induced apoptosis and autophagy through DDIT3-mediated endoplasmic reticulum stress pathway. Participates in DNA repair following gamma-irradiation by facilitating DNA access of the transcription machinery through interaction with MSL1 leading to inhibition of histone H4' Lys-16' acetylation (H4K16ac). Coactivator of PAX2 transcription factor activity, both by recruiting the EP300 cofactor to increase PAX2 transcription factor activity and by binding PAXIP1 to suppress PAXIP1-induced inhibition on PAX2. Positively regulates cell cycle progression through interaction with COPS5 inducing cytoplasmic translocation of CDKN1B leading to the CDKN1B degradation. Coordinates, through its interaction with EP300, the assiociation of MYOD1, EP300 and DDX5 to the MYOG promoter, leading to inhibition of cell-cycle progression and myogenic differentiation promotion. Negatively regulates beta cell proliferation via inhibition of cell-cycle regulatory genes expression through the suppression of their promoter activities. Also required for LHB expression and ovarian maturation. Exacerbates CNS inflammation and demyelination upon cuprizone treatment. The sequence is that of Nuclear protein 1 from Mus musculus (Mouse).